We begin with the raw amino-acid sequence, 249 residues long: tRNA pseudouridine synthase A (249 aa).

The active-site Nucleophile is D53. Y111 is a substrate binding site.

This sequence belongs to the tRNA pseudouridine synthase TruA family. As to quaternary structure, homodimer.

It carries out the reaction uridine(38/39/40) in tRNA = pseudouridine(38/39/40) in tRNA. Its function is as follows. Formation of pseudouridine at positions 38, 39 and 40 in the anticodon stem and loop of transfer RNAs. The polypeptide is tRNA pseudouridine synthase A (Streptococcus pneumoniae (strain Taiwan19F-14)).